A 503-amino-acid polypeptide reads, in one-letter code: Glycerol kinase (503 aa).

Threonine 17 is an ADP binding site. 3 residues coordinate ATP: threonine 17, threonine 18, and serine 19. Residue threonine 17 coordinates sn-glycerol 3-phosphate. Residue arginine 21 participates in ADP binding. Sn-glycerol 3-phosphate-binding residues include arginine 87, glutamate 88, tyrosine 141, and aspartate 245. 5 residues coordinate glycerol: arginine 87, glutamate 88, tyrosine 141, aspartate 245, and glutamine 246. ADP contacts are provided by threonine 267 and glycine 310. Threonine 267, glycine 310, glutamine 314, and glycine 411 together coordinate ATP. Glycine 411 and asparagine 415 together coordinate ADP.

This sequence belongs to the FGGY kinase family.

The enzyme catalyses glycerol + ATP = sn-glycerol 3-phosphate + ADP + H(+). It functions in the pathway polyol metabolism; glycerol degradation via glycerol kinase pathway; sn-glycerol 3-phosphate from glycerol: step 1/1. With respect to regulation, inhibited by fructose 1,6-bisphosphate (FBP). Its function is as follows. Key enzyme in the regulation of glycerol uptake and metabolism. Catalyzes the phosphorylation of glycerol to yield sn-glycerol 3-phosphate. The sequence is that of Glycerol kinase from Pseudomonas tolaasii.